The sequence spans 235 residues: Uridylate kinase (235 aa).

8–11 (KFSG) lines the ATP pocket. Residues 16 to 21 (GKEGYG) are involved in allosteric activation by GTP. UMP is bound at residue Gly-50. ATP is bound by residues Gly-51 and Arg-55. UMP contacts are provided by residues Asp-71 and 132 to 139 (TGNPYFTT). Thr-159, Tyr-165, and Asp-168 together coordinate ATP.

The protein belongs to the UMP kinase family. As to quaternary structure, homohexamer.

It is found in the cytoplasm. It carries out the reaction UMP + ATP = UDP + ADP. It functions in the pathway pyrimidine metabolism; CTP biosynthesis via de novo pathway; UDP from UMP (UMPK route): step 1/1. Its activity is regulated as follows. Allosterically activated by GTP. Inhibited by UTP. Functionally, catalyzes the reversible phosphorylation of UMP to UDP. This Sulfurovum sp. (strain NBC37-1) protein is Uridylate kinase.